We begin with the raw amino-acid sequence, 354 residues long: Rhodopsin (354 aa).

The Extracellular segment spans residues 1-36 (MNGTEGENFYVPMSNKTGVVRNPFEYPQYYLADHWM). N2 and N15 each carry an N-linked (GlcNAc...) asparagine glycan. Residues 37-61 (FAVLAAYMFFLIITGFPVNFLTLFV) traverse the membrane as a helical segment. The Cytoplasmic portion of the chain corresponds to 62-73 (TIQNKKLRQPLN). The helical transmembrane segment at 74 to 96 (YILLNLAVANLFMVFGGFTTTLI) threads the bilayer. Residues 97 to 110 (TSMNGYFVFGSTGC) are Extracellular-facing. C110 and C187 are oxidised to a cystine. Residues 111–133 (NLEGFFATLGGEISLWSLVVLAI) form a helical membrane-spanning segment. The 'Ionic lock' involved in activated form stabilization signature appears at 134 to 136 (ERY). At 134-152 (ERYVVVCKPMSNFRFGSQH) the chain is on the cytoplasmic side. A helical membrane pass occupies residues 153–173 (AIAGVSLTWVMAMACAAPPLV). The Extracellular segment spans residues 174 to 202 (GWSRYIPEGLQCSCGIDYYTPKPEINNVS). N-linked (GlcNAc...) asparagine glycosylation occurs at N200. The chain crosses the membrane as a helical span at residues 203 to 224 (FVIYMFVVHFSIPLTIIFFCYG). The Cytoplasmic segment spans residues 225–252 (RLVCTVKAAAAQQQESETTQRAEREVTR). Residues 253–274 (MVVIMVIGFLICWLPYASVALY) traverse the membrane as a helical segment. Residues 275 to 286 (IFNNQGSEFGPV) lie on the Extracellular side of the membrane. The chain crosses the membrane as a helical span at residues 287–308 (FMTIPSFFAKSSALYNPLIYIL). The residue at position 296 (K296) is an N6-(retinylidene)lysine. Residues 309–354 (MNKQFRNCMITTLCCGKNPFEEEESTSASASKTEASSVSSSQVSPA) are Cytoplasmic-facing. S-palmitoyl cysteine attachment occurs at residues C322 and C323. The tract at residues 333–354 (STSASASKTEASSVSSSQVSPA) is disordered. Over residues 334–354 (TSASASKTEASSVSSSQVSPA) the composition is skewed to low complexity.

Belongs to the G-protein coupled receptor 1 family. Opsin subfamily. In terms of processing, phosphorylated on some or all of the serine and threonine residues present in the C-terminal region. Post-translationally, contains one covalently linked retinal chromophore.

It localises to the membrane. It is found in the cell projection. The protein resides in the cilium. The protein localises to the photoreceptor outer segment. Its function is as follows. Photoreceptor required for image-forming vision at low light intensity. While most salt water fish species use retinal as chromophore, most freshwater fish use 3-dehydroretinal, or a mixture of retinal and 3-dehydroretinal. Light-induced isomerization of 11-cis to all-trans retinal triggers a conformational change that activates signaling via G-proteins. Subsequent receptor phosphorylation mediates displacement of the bound G-protein alpha subunit by arrestin and terminates signaling. In Galeus melastomus (Blackmouth catshark), this protein is Rhodopsin (rho).